The primary structure comprises 938 residues: Kexin (938 aa).

Positions 1 to 20 are cleaved as a signal peptide; the sequence is MLPIKLLIFILGYLLSPTLQ. Asparagine 41 and asparagine 193 each carry an N-linked (GlcNAc...) asparagine glycan. The Peptidase S8 domain maps to 179–489; that stretch reads QWHLINLKYP…YGKTDAYKMV (311 aa). Active-site charge relay system residues include aspartate 213 and histidine 251. Cystine bridges form between cysteine 267–cysteine 414 and cysteine 359–cysteine 389. Serine 422 acts as the Charge relay system in catalysis. N-linked (GlcNAc...) asparagine glycans are attached at residues asparagine 441, asparagine 512, asparagine 539, and asparagine 599. The P/Homo B domain maps to 498–647; that stretch reads VKPQAWYYSD…QFRIFGESID (150 aa). The disordered stretch occupies residues 671-768; it reads EKQNSKSTTT…DNDNDNGNKK (98 aa). Residues 677–691 show a composition bias toward low complexity; the sequence is STTTTSSTTTATTTS. A compositionally biased stretch (polar residues) spans 711–735; it reads KVDNSASITTSQTASLTSSNEQHQP. Residues 740–762 show a composition bias toward acidic residues; sequence SDSDSDTDDENKQEGEEDNDNDN. Residues 775–795 form a helical membrane-spanning segment; sequence GFYLMSIAVVGFIAVLLVMKF. At 796-924 the chain is on the cytoplasmic side; that stretch reads HKTPGSGRRR…SGTSTKKYKD (129 aa). Positions 798-808 are enriched in basic residues; sequence TPGSGRRRRRR. A disordered region spans residues 798-938; the sequence is TPGSGRRRRR…EDHKDVVGTQ (141 aa). Residues 820 to 831 are compositionally biased toward acidic residues; that stretch reads DYSDSDDDEDDF. Over residues 832–849 the composition is skewed to basic and acidic residues; the sequence is DTRRADDDSFDLGHRNDQ. Positions 850–859 are enriched in low complexity; that stretch reads RVVSASQQQR. Residues 860–874 show a composition bias toward basic and acidic residues; the sequence is QYDRQQDETRDRLFD. The segment covering 902-919 has biased composition (polar residues); that stretch reads QQSAKAPSNSEGNSGTST. The span at 921–938 shows a compositional bias: basic and acidic residues; it reads KYKDNEADEDHKDVVGTQ.

Belongs to the peptidase S8 family. Furin subfamily. It depends on Ca(2+) as a cofactor. O-glycosylated.

The protein resides in the golgi apparatus. Its subcellular location is the trans-Golgi network membrane. It carries out the reaction Cleavage of -Lys-Arg-|-Xaa- and -Arg-Arg-|-Xaa- bonds to process yeast alpha-factor pheromone and killer toxin precursors.. In Candida albicans (strain WO-1) (Yeast), this protein is Kexin (KEX2).